Reading from the N-terminus, the 138-residue chain is Large ribosomal subunit protein uL16 (138 aa).

Residues 1 to 15 show a composition bias toward basic residues; it reads MLSPKKVKYRKKQRG. The tract at residues 1 to 21 is disordered; sequence MLSPKKVKYRKKQRGRLSGEA.

This sequence belongs to the universal ribosomal protein uL16 family. Part of the 50S ribosomal subunit.

Functionally, binds 23S rRNA and is also seen to make contacts with the A and possibly P site tRNAs. This is Large ribosomal subunit protein uL16 from Borreliella afzelii (strain PKo) (Borrelia afzelii).